Reading from the N-terminus, the 30-residue chain is Cyclotide psyleio E (30 aa).

The cyclopeptide (Ser-Lys) cross-link spans 1–30 (SVTPIVCGETCFGGTCNTPGCSCSWPICTK). Cystine bridges form between C7/C21, C11/C23, and C16/C28.

Post-translationally, this is a cyclic peptide.

In terms of biological role, probably participates in a plant defense mechanism. The polypeptide is Cyclotide psyleio E (Psychotria leiocarpa).